The chain runs to 141 residues: Large ribosomal subunit protein uL11 (141 aa).

Belongs to the universal ribosomal protein uL11 family. In terms of assembly, part of the ribosomal stalk of the 50S ribosomal subunit. Interacts with L10 and the large rRNA to form the base of the stalk. L10 forms an elongated spine to which L12 dimers bind in a sequential fashion forming a multimeric L10(L12)X complex. In terms of processing, one or more lysine residues are methylated.

Forms part of the ribosomal stalk which helps the ribosome interact with GTP-bound translation factors. This Chlorobaculum tepidum (strain ATCC 49652 / DSM 12025 / NBRC 103806 / TLS) (Chlorobium tepidum) protein is Large ribosomal subunit protein uL11.